A 358-amino-acid chain; its full sequence is 3-isopropylmalate dehydrogenase (358 aa).

NAD(+) is bound at residue 77 to 90 (GPKWTNLPPDQQPE). Residues arginine 98, arginine 108, arginine 137, and aspartate 226 each contribute to the substrate site. Residues aspartate 226, aspartate 250, and aspartate 254 each coordinate Mg(2+). NAD(+) is bound at residue 284–296 (GSAPDIAGKGIAN).

This sequence belongs to the isocitrate and isopropylmalate dehydrogenases family. LeuB type 1 subfamily. In terms of assembly, homodimer. Mg(2+) is required as a cofactor. Mn(2+) serves as cofactor.

The protein localises to the cytoplasm. It carries out the reaction (2R,3S)-3-isopropylmalate + NAD(+) = 4-methyl-2-oxopentanoate + CO2 + NADH. It participates in amino-acid biosynthesis; L-leucine biosynthesis; L-leucine from 3-methyl-2-oxobutanoate: step 3/4. Catalyzes the oxidation of 3-carboxy-2-hydroxy-4-methylpentanoate (3-isopropylmalate) to 3-carboxy-4-methyl-2-oxopentanoate. The product decarboxylates to 4-methyl-2 oxopentanoate. In Haemophilus influenzae (strain ATCC 51907 / DSM 11121 / KW20 / Rd), this protein is 3-isopropylmalate dehydrogenase (leuB).